The following is a 233-amino-acid chain: Probable cyclic nucleotide phosphodiesterase COSY_0614 (233 aa).

Asp10, His12, Asp48, Asn78, His144, His183, and His185 together coordinate Fe cation. AMP-binding positions include His12, Asp48, and 78 to 79 (NH). Residue His185 coordinates AMP.

This sequence belongs to the cyclic nucleotide phosphodiesterase class-III family. Fe(2+) serves as cofactor.

The polypeptide is Probable cyclic nucleotide phosphodiesterase COSY_0614 (Vesicomyosocius okutanii subsp. Calyptogena okutanii (strain HA)).